The sequence spans 236 residues: 2,3,4,5-tetrahydropyridine-2,6-dicarboxylate N-acetyltransferase (236 aa).

This sequence belongs to the transferase hexapeptide repeat family. DapH subfamily.

It carries out the reaction (S)-2,3,4,5-tetrahydrodipicolinate + acetyl-CoA + H2O = L-2-acetamido-6-oxoheptanedioate + CoA. Its pathway is amino-acid biosynthesis; L-lysine biosynthesis via DAP pathway; LL-2,6-diaminopimelate from (S)-tetrahydrodipicolinate (acetylase route): step 1/3. Catalyzes the transfer of an acetyl group from acetyl-CoA to tetrahydrodipicolinate. The protein is 2,3,4,5-tetrahydropyridine-2,6-dicarboxylate N-acetyltransferase of Clostridium botulinum (strain Kyoto / Type A2).